A 522-amino-acid polypeptide reads, in one-letter code: Target of rapamycin complex 2 subunit MAPKAP1 (522 aa).

Alanine 2 is modified (N-acetylalanine). The tract at residues alanine 2–histidine 184 is interaction with MAP3K2. The interval alanine 2 to lysine 267 is interaction with NBN. At threonine 86 the chain carries Phosphothreonine. Serine 128, serine 186, serine 315, and serine 356 each carry phosphoserine. The 129-residue stretch at glutamine 139–lysine 267 folds into the CRIM domain. The tract at residues leucine 279–arginine 353 is SIN1-type RBD. Residues histidine 382–glutamate 487 enclose the SIN1-type PH domain. Arginine 393 is an a 1,2-diacyl-sn-glycero-3-phospho-(1D-myo-inositol-3,4,5-trisphosphate) binding site. The residue at position 398 (threonine 398) is a Phosphothreonine. A 1,2-diacyl-sn-glycero-3-phospho-(1D-myo-inositol-3,4,5-trisphosphate)-binding residues include lysine 428 and lysine 464. The segment at phenylalanine 468–glutamine 522 is interaction with ATF2. Serine 510 is modified (phosphoserine).

It belongs to the SIN1 family. In terms of assembly, component of the mechanistic target of rapamycin complex 2 (mTORC2), consisting in two heterotretramers composed of MTOR, MLST8, RICTOR and MAPKAP1/SIN1. The mTORC2 core complex associates with PRR5/PROTOR1 and/or PRR5L/PROTOR2. Contrary to mTORC1, mTORC2 does not bind to and is not sensitive to FKBP12-rapamycin. Interacts with MAP3K2. Interacts with ATF2. Interacts with MAPK8. Interacts with GTP-bound HRAS and KRAS; inhibiting their activity. Interacts with IFNAR2. Interacts with CCDC28B. As to quaternary structure, interacts with NBN. Post-translationally, phosphorylation at Ser-128 by PKC promotes relocalization to the perinuclear region, where the mTORC2 complex specifically mediates phosphorylation of SGK1. Phosphorylated at Thr-86 by AKT1 or RPS6KB1 in the presence of growth factors; the effect of this phosphorylation is however unclear. According to two studies, phosphorylation at Thr-86 by AKT1 is part of a positive feedback loop that increases mTORC2 activation. According to another study, phosphorylation at Thr-86 and Thr-398 by RPS6KB1 promotes dissociation from the mTORC2 complex, leading to inhibit mTORC2 signaling. As to expression, ubiquitously expressed, with highest levels in heart and skeletal muscle.

Its subcellular location is the cell membrane. It localises to the endoplasmic reticulum membrane. It is found in the early endosome membrane. The protein resides in the late endosome membrane. The protein localises to the lysosome membrane. Its subcellular location is the golgi apparatus membrane. It localises to the mitochondrion outer membrane. It is found in the cytoplasm. The protein resides in the perinuclear region. The protein localises to the nucleus. Its subcellular location is the cytosol. Its activity is regulated as follows. Phosphatidylinositol 3,4,5-trisphosphate (PI(3,4,5)P3) promotes MTOR activation by relieving MAPKAP1/SIN1-mediated inhibition of MTOR that takes place in absence of PI(3,4,5)P3. Functionally, component of the mechanistic target of rapamycin complex 2 (mTORC2), which transduces signals from growth factors to pathways involved in proliferation, cytoskeletal organization, lipogenesis and anabolic output. In response to growth factors, mTORC2 phosphorylates and activates AGC protein kinase family members, including AKT (AKT1, AKT2 and AKT3), PKC (PRKCA, PRKCB and PRKCE) and SGK1. In contrast to mTORC1, mTORC2 is nutrient-insensitive. Within the mTORC2 complex, MAPKAP1/SIN1 acts as a substrate adapter which recognizes and binds AGC protein kinase family members for phosphorylation by MTOR. mTORC2 plays a critical role in AKT1 activation by mediating phosphorylation of different sites depending on the context, such as 'Thr-450', 'Ser-473', 'Ser-477' or 'Thr-479', facilitating the phosphorylation of the activation loop of AKT1 on 'Thr-308' by PDPK1/PDK1 which is a prerequisite for full activation. mTORC2 catalyzes the phosphorylation of SGK1 at 'Ser-422' and of PRKCA on 'Ser-657'. The mTORC2 complex also phosphorylates various proteins involved in insulin signaling, such as FBXW8 and IGF2BP1. mTORC2 acts upstream of Rho GTPases to regulate the actin cytoskeleton, probably by activating one or more Rho-type guanine nucleotide exchange factors. mTORC2 promotes the serum-induced formation of stress-fibers or F-actin. MAPKAP1 inhibits MAP3K2 by preventing its dimerization and autophosphorylation. Inhibits HRAS and KRAS independently of mTORC2 complex. Enhances osmotic stress-induced phosphorylation of ATF2 and ATF2-mediated transcription. Involved in ciliogenesis, regulates cilia length through its interaction with CCDC28B independently of mTORC2 complex. In contrast to isoform 1, isoform 2 and isoform 6, isoform 4 is not a component of the a mTORC2 complex. This chain is Target of rapamycin complex 2 subunit MAPKAP1, found in Homo sapiens (Human).